The sequence spans 826 residues: Lon protease (826 aa).

In terms of domain architecture, Lon N-terminal spans 26-221 (LPMLPVRDVV…AVNGFVSREV (196 aa)). 373 to 380 (GPPGVGKT) provides a ligand contact to ATP. Positions 609–790 (EPQIGLATGL…NEVLEKALLP (182 aa)) constitute a Lon proteolytic domain. Residues Ser696 and Lys739 contribute to the active site. The tract at residues 788 to 826 (LLPAEKKKAPPKKKPPKKAAKPKAKKTQPKAKTTEAADK) is disordered. Basic residues predominate over residues 796 to 816 (APPKKKPPKKAAKPKAKKTQP).

It belongs to the peptidase S16 family. As to quaternary structure, homohexamer. Organized in a ring with a central cavity.

The protein localises to the cytoplasm. The enzyme catalyses Hydrolysis of proteins in presence of ATP.. Functionally, ATP-dependent serine protease that mediates the selective degradation of mutant and abnormal proteins as well as certain short-lived regulatory proteins. Required for cellular homeostasis and for survival from DNA damage and developmental changes induced by stress. Degrades polypeptides processively to yield small peptide fragments that are 5 to 10 amino acids long. Binds to DNA in a double-stranded, site-specific manner. The protein is Lon protease of Desulfatibacillum aliphaticivorans.